The sequence spans 99 residues: Nucleoid-associated protein SSU98_0195 (99 aa).

Belongs to the YbaB/EbfC family. In terms of assembly, homodimer.

The protein resides in the cytoplasm. The protein localises to the nucleoid. Binds to DNA and alters its conformation. May be involved in regulation of gene expression, nucleoid organization and DNA protection. This Streptococcus suis (strain 98HAH33) protein is Nucleoid-associated protein SSU98_0195.